The chain runs to 188 residues: dCTP deaminase (188 aa).

DCTP is bound by residues 111–116 (KSTYAR), 135–137 (TLE), Q156, Y170, and Q180. E137 (proton donor/acceptor) is an active-site residue.

Belongs to the dCTP deaminase family. As to quaternary structure, homotrimer.

The catalysed reaction is dCTP + H2O + H(+) = dUTP + NH4(+). It participates in pyrimidine metabolism; dUMP biosynthesis; dUMP from dCTP (dUTP route): step 1/2. In terms of biological role, catalyzes the deamination of dCTP to dUTP. The chain is dCTP deaminase from Laribacter hongkongensis (strain HLHK9).